The following is a 731-amino-acid chain: 1,4-alpha-glucan branching enzyme GlgB (731 aa).

Aspartate 412 acts as the Nucleophile in catalysis. The active-site Proton donor is glutamate 465.

Belongs to the glycosyl hydrolase 13 family. GlgB subfamily. In terms of assembly, monomer.

It catalyses the reaction Transfers a segment of a (1-&gt;4)-alpha-D-glucan chain to a primary hydroxy group in a similar glucan chain.. It functions in the pathway glycan biosynthesis; glycogen biosynthesis. Catalyzes the formation of the alpha-1,6-glucosidic linkages in glycogen by scission of a 1,4-alpha-linked oligosaccharide from growing alpha-1,4-glucan chains and the subsequent attachment of the oligosaccharide to the alpha-1,6 position. In Bordetella parapertussis (strain 12822 / ATCC BAA-587 / NCTC 13253), this protein is 1,4-alpha-glucan branching enzyme GlgB.